A 201-amino-acid polypeptide reads, in one-letter code: Sec-independent protein translocase protein TatB (201 aa).

A helical membrane pass occupies residues 1–21 (MLDLGWSEILVIAVVLIVVVG). Positions 96–201 (LSEAAKAKPA…RRKKTAGTAP (106 aa)) are disordered. Low complexity-rich tracts occupy residues 102 to 114 (AKPA…AADS) and 159 to 187 (TSAK…APAK). The segment covering 189–201 (PSPRRKKTAGTAP) has biased composition (basic residues).

The protein belongs to the TatB family. In terms of assembly, the Tat system comprises two distinct complexes: a TatABC complex, containing multiple copies of TatA, TatB and TatC subunits, and a separate TatA complex, containing only TatA subunits. Substrates initially bind to the TatABC complex, which probably triggers association of the separate TatA complex to form the active translocon.

Its subcellular location is the cell inner membrane. Part of the twin-arginine translocation (Tat) system that transports large folded proteins containing a characteristic twin-arginine motif in their signal peptide across membranes. Together with TatC, TatB is part of a receptor directly interacting with Tat signal peptides. TatB may form an oligomeric binding site that transiently accommodates folded Tat precursor proteins before their translocation. The chain is Sec-independent protein translocase protein TatB from Chelativorans sp. (strain BNC1).